A 214-amino-acid chain; its full sequence is ATP phosphoribosyltransferase (214 aa).

This sequence belongs to the ATP phosphoribosyltransferase family. Short subfamily. Heteromultimer composed of HisG and HisZ subunits.

It localises to the cytoplasm. It carries out the reaction 1-(5-phospho-beta-D-ribosyl)-ATP + diphosphate = 5-phospho-alpha-D-ribose 1-diphosphate + ATP. It participates in amino-acid biosynthesis; L-histidine biosynthesis; L-histidine from 5-phospho-alpha-D-ribose 1-diphosphate: step 1/9. Functionally, catalyzes the condensation of ATP and 5-phosphoribose 1-diphosphate to form N'-(5'-phosphoribosyl)-ATP (PR-ATP). Has a crucial role in the pathway because the rate of histidine biosynthesis seems to be controlled primarily by regulation of HisG enzymatic activity. The protein is ATP phosphoribosyltransferase of Methylibium petroleiphilum (strain ATCC BAA-1232 / LMG 22953 / PM1).